The chain runs to 408 residues: Peptidase T (408 aa).

Position 78 (H78) interacts with Zn(2+). The active site involves D80. D140 lines the Zn(2+) pocket. E174 functions as the Proton acceptor in the catalytic mechanism. E175, D197, and H379 together coordinate Zn(2+).

Belongs to the peptidase M20B family. Zn(2+) is required as a cofactor.

Its subcellular location is the cytoplasm. It catalyses the reaction Release of the N-terminal residue from a tripeptide.. In terms of biological role, cleaves the N-terminal amino acid of tripeptides. This is Peptidase T from Staphylococcus aureus (strain bovine RF122 / ET3-1).